The chain runs to 247 residues: Eukaryotic translation initiation factor 3 subunit J (247 aa).

2 disordered regions span residues 1-64 (MADW…KTLK) and 77-101 (EEKR…EEQM). Residues 24 to 45 (EGEDEDDDIKESWDDDDEDEKK) show a composition bias toward acidic residues. A coiled-coil region spans residues 43–108 (EKKEDEAKNT…EQMAEKLRRQ (66 aa)).

The protein belongs to the eIF-3 subunit J family. As to quaternary structure, component of the eukaryotic translation initiation factor 3 (eIF-3) complex.

Its subcellular location is the cytoplasm. Its function is as follows. Component of the eukaryotic translation initiation factor 3 (eIF-3) complex, which is involved in protein synthesis of a specialized repertoire of mRNAs and, together with other initiation factors, stimulates binding of mRNA and methionyl-tRNAi to the 40S ribosome. The eIF-3 complex specifically targets and initiates translation of a subset of mRNAs involved in cell proliferation. The protein is Eukaryotic translation initiation factor 3 subunit J of Nematostella vectensis (Starlet sea anemone).